The following is a 789-amino-acid chain: Phenylalanine--tRNA ligase beta subunit (789 aa).

The region spanning 39–149 (ADGLEAFRIA…HEAPVGQSYV (111 aa)) is the tRNA-binding domain. In terms of domain architecture, B5 spans 399 to 471 (SAVPVISYDP…RIEGLDNVPS (73 aa)). Positions 449, 455, and 459 each coordinate Mg(2+). In terms of domain architecture, FDX-ACB spans 696–788 (SMLQPVFRDF…AAAKKGARLR (93 aa)).

It belongs to the phenylalanyl-tRNA synthetase beta subunit family. Type 1 subfamily. As to quaternary structure, tetramer of two alpha and two beta subunits. Requires Mg(2+) as cofactor.

It is found in the cytoplasm. The enzyme catalyses tRNA(Phe) + L-phenylalanine + ATP = L-phenylalanyl-tRNA(Phe) + AMP + diphosphate + H(+). This chain is Phenylalanine--tRNA ligase beta subunit, found in Zymomonas mobilis subsp. mobilis (strain ATCC 31821 / ZM4 / CP4).